The chain runs to 33 residues: Protamine TP14 (33 aa).

The interval Met1–Arg33 is disordered.

In terms of tissue distribution, testis.

It is found in the nucleus. It localises to the chromosome. Protamines substitute for histones in the chromatin of sperm during the haploid phase of spermatogenesis. They compact sperm DNA into a highly condensed, stable and inactive complex. This chain is Protamine TP14, found in Oncorhynchus mykiss (Rainbow trout).